The primary structure comprises 37 residues: Large ribosomal subunit protein bL36 (37 aa).

This sequence belongs to the bacterial ribosomal protein bL36 family.

In Geobacter sp. (strain M21), this protein is Large ribosomal subunit protein bL36.